An 804-amino-acid chain; its full sequence is Zinc finger protein YGR067C (804 aa).

2 C2H2-type zinc fingers span residues Y8 to H30 and F36 to H59. The segment covering Q782–N796 has biased composition (polar residues). The tract at residues Q782–K804 is disordered.

The protein resides in the nucleus. The protein is Zinc finger protein YGR067C of Saccharomyces cerevisiae (strain ATCC 204508 / S288c) (Baker's yeast).